The sequence spans 175 residues: Alpha-crystallin B chain (175 aa).

Met1 bears the N-acetylmethionine mark. Residues Ser19, Ser45, and Ser59 each carry the phosphoserine modification. The region spanning 56-164 (RAPSWIDTGL…PERTIPITRE (109 aa)) is the sHSP domain. His83 is a Zn(2+) binding site. Lys92 bears the N6-acetyllysine mark. Zn(2+) contacts are provided by His104, Glu106, His111, and His119. The segment at 145-175 (VNGPRKQVSGPERTIPITREEKPAVAAAPKK) is disordered. N6-acetyllysine is present on Lys166.

It belongs to the small heat shock protein (HSP20) family. In terms of assembly, heteromer composed of three CRYAA and one CRYAB subunits. Aggregates with homologous proteins, including the small heat shock protein HSPB1, to form large heteromeric complexes. Inter-subunit bridging via zinc ions enhances stability, which is crucial as there is no protein turn over in the lens. Interacts with HSPBAP1. Interacts with TTN/titin. Interacts with TMEM109; in the cellular response to DNA damage. Interacts with DES; binds rapidly during early stages of DES filament assembly and a reduced binding seen in the later stages. Interacts with TMED10; the interaction mediates the translocation from the cytoplasm into the ERGIC (endoplasmic reticulum-Golgi intermediate compartment) and thereby secretion. Interacts with ATP6V1A and with MTOR, forming a ternary complex. In terms of tissue distribution, abundantly expressed in the lens of the eye. Expressed in ventricular cardiomyocytes of the heart. Also expressed in skeletal muscle and the kidney.

The protein localises to the cytoplasm. The protein resides in the cytosol. It is found in the nucleus. Its subcellular location is the secreted. It localises to the lysosome. Its function is as follows. May contribute to the transparency and refractive index of the lens. Has chaperone-like activity, preventing aggregation of various proteins under a wide range of stress conditions. In lens epithelial cells, stabilizes the ATP6V1A protein, preventing its degradation by the proteasome. This Mus musculus (Mouse) protein is Alpha-crystallin B chain.